The sequence spans 143 residues: Large ribosomal subunit protein uL11 (143 aa).

The protein belongs to the universal ribosomal protein uL11 family. In terms of assembly, part of the ribosomal stalk of the 50S ribosomal subunit. Interacts with L10 and the large rRNA to form the base of the stalk. L10 forms an elongated spine to which L12 dimers bind in a sequential fashion forming a multimeric L10(L12)X complex. In terms of processing, one or more lysine residues are methylated.

In terms of biological role, forms part of the ribosomal stalk which helps the ribosome interact with GTP-bound translation factors. This Burkholderia cenocepacia (strain HI2424) protein is Large ribosomal subunit protein uL11.